The primary structure comprises 563 residues: Dihydroxy-acid dehydratase (563 aa).

Residue Asp79 participates in Mg(2+) binding. Cys120 lines the [2Fe-2S] cluster pocket. Positions 121 and 122 each coordinate Mg(2+). N6-carboxylysine is present on Lys122. [2Fe-2S] cluster is bound at residue Cys193. Glu451 contributes to the Mg(2+) binding site. The Proton acceptor role is filled by Ser477.

This sequence belongs to the IlvD/Edd family. In terms of assembly, homodimer. The cofactor is [2Fe-2S] cluster. It depends on Mg(2+) as a cofactor.

It carries out the reaction (2R)-2,3-dihydroxy-3-methylbutanoate = 3-methyl-2-oxobutanoate + H2O. It catalyses the reaction (2R,3R)-2,3-dihydroxy-3-methylpentanoate = (S)-3-methyl-2-oxopentanoate + H2O. The protein operates within amino-acid biosynthesis; L-isoleucine biosynthesis; L-isoleucine from 2-oxobutanoate: step 3/4. Its pathway is amino-acid biosynthesis; L-valine biosynthesis; L-valine from pyruvate: step 3/4. Functions in the biosynthesis of branched-chain amino acids. Catalyzes the dehydration of (2R,3R)-2,3-dihydroxy-3-methylpentanoate (2,3-dihydroxy-3-methylvalerate) into 2-oxo-3-methylpentanoate (2-oxo-3-methylvalerate) and of (2R)-2,3-dihydroxy-3-methylbutanoate (2,3-dihydroxyisovalerate) into 2-oxo-3-methylbutanoate (2-oxoisovalerate), the penultimate precursor to L-isoleucine and L-valine, respectively. The protein is Dihydroxy-acid dehydratase of Sulfurovum sp. (strain NBC37-1).